Here is a 223-residue protein sequence, read N- to C-terminus: MNRIIPPENLPELLERAHMMAGVSLAQIAAQRGLSVPKDLKRDKGWVGQLIEMELGATAGSKPEQDFLHLGVELKTIPIDSQGRPLETTYVCVAPLSNIQGLTWQNSLVSHKLQRVLWVPVEGERHIPVGERRIGTPILWEPDPQELQLLQQDWEEIMELIALGKVEKLTARHGEVLQLRPKAANSKALTQSIAEDGSLKMTNPRGFYLKTSFTAMILNKVFG.

It belongs to the MutH family.

Its subcellular location is the cytoplasm. Sequence-specific endonuclease that cleaves unmethylated GATC sequences. It is involved in DNA mismatch repair. The protein is DNA mismatch repair protein MutH of Shewanella baltica (strain OS223).